Reading from the N-terminus, the 384-residue chain is Anhydro-N-acetylmuramic acid kinase (384 aa).

12 to 19 (GTSLDGVD) serves as a coordination point for ATP.

It belongs to the anhydro-N-acetylmuramic acid kinase family.

The catalysed reaction is 1,6-anhydro-N-acetyl-beta-muramate + ATP + H2O = N-acetyl-D-muramate 6-phosphate + ADP + H(+). Its pathway is amino-sugar metabolism; 1,6-anhydro-N-acetylmuramate degradation. It functions in the pathway cell wall biogenesis; peptidoglycan recycling. In terms of biological role, catalyzes the specific phosphorylation of 1,6-anhydro-N-acetylmuramic acid (anhMurNAc) with the simultaneous cleavage of the 1,6-anhydro ring, generating MurNAc-6-P. Is required for the utilization of anhMurNAc either imported from the medium or derived from its own cell wall murein, and thus plays a role in cell wall recycling. This chain is Anhydro-N-acetylmuramic acid kinase, found in Cronobacter sakazakii (strain ATCC BAA-894) (Enterobacter sakazakii).